The chain runs to 181 residues: Regulator of G-protein signaling 5 (181 aa).

In terms of domain architecture, RGS spans 64 to 180; it reads SLDKLLQNNY…VRSEFYQEFI (117 aa).

Its subcellular location is the cytoplasm. The protein resides in the membrane. In terms of biological role, inhibits signal transduction by increasing the GTPase activity of G protein alpha subunits thereby driving them into their inactive GDP-bound form. Binds to G(i)-alpha and G(o)-alpha, but not to G(s)-alpha. This Sus scrofa (Pig) protein is Regulator of G-protein signaling 5 (RGS5).